We begin with the raw amino-acid sequence, 424 residues long: Glutamate-1-semialdehyde 2,1-aminomutase (424 aa).

Residue Lys263 is modified to N6-(pyridoxal phosphate)lysine.

Belongs to the class-III pyridoxal-phosphate-dependent aminotransferase family. HemL subfamily. As to quaternary structure, homodimer. Pyridoxal 5'-phosphate serves as cofactor.

Its subcellular location is the cytoplasm. The enzyme catalyses (S)-4-amino-5-oxopentanoate = 5-aminolevulinate. The protein operates within porphyrin-containing compound metabolism; protoporphyrin-IX biosynthesis; 5-aminolevulinate from L-glutamyl-tRNA(Glu): step 2/2. This Campylobacter jejuni subsp. doylei (strain ATCC BAA-1458 / RM4099 / 269.97) protein is Glutamate-1-semialdehyde 2,1-aminomutase.